The primary structure comprises 137 residues: Small ribosomal subunit protein uS11 (137 aa).

Residues Glu116–Val137 are disordered.

It belongs to the universal ribosomal protein uS11 family. In terms of assembly, part of the 30S ribosomal subunit.

Functionally, located on the platform of the 30S subunit. This is Small ribosomal subunit protein uS11 from Methanopyrus kandleri (strain AV19 / DSM 6324 / JCM 9639 / NBRC 100938).